The primary structure comprises 120 residues: UPF0102 protein Caur_2698 (120 aa).

The protein belongs to the UPF0102 family.

This chain is UPF0102 protein Caur_2698, found in Chloroflexus aurantiacus (strain ATCC 29366 / DSM 635 / J-10-fl).